The sequence spans 364 residues: uncharacterized protein (364 aa).

Positions 1–17 are enriched in acidic residues; sequence MEPGELMEVDTSQELDE. Residues 1-61 are disordered; that stretch reads MEPGELMEVD…EEDQSSTETM (61 aa). Residues 19-31 show a composition bias toward basic and acidic residues; sequence TSAKETDQPKDAQ.

This is an uncharacterized protein from Caenorhabditis elegans.